The primary structure comprises 395 residues: Argininosuccinate synthase (395 aa).

8–16 (AYSGGLDTS) lines the ATP pocket. L-citrulline is bound at residue tyrosine 86. Glycine 116 is a binding site for ATP. L-aspartate is bound by residues threonine 118, asparagine 122, and aspartate 123. Asparagine 122 contributes to the L-citrulline binding site. Positions 126, 173, 182, 257, and 269 each coordinate L-citrulline.

This sequence belongs to the argininosuccinate synthase family. Type 1 subfamily. Homotetramer.

The protein resides in the cytoplasm. It catalyses the reaction L-citrulline + L-aspartate + ATP = 2-(N(omega)-L-arginino)succinate + AMP + diphosphate + H(+). The protein operates within amino-acid biosynthesis; L-arginine biosynthesis; L-arginine from L-ornithine and carbamoyl phosphate: step 2/3. In Methanocaldococcus jannaschii (strain ATCC 43067 / DSM 2661 / JAL-1 / JCM 10045 / NBRC 100440) (Methanococcus jannaschii), this protein is Argininosuccinate synthase.